A 1293-amino-acid chain; its full sequence is Phosphoribosylformylglycinamidine synthase (1293 aa).

ATP contacts are provided by residues 305 to 316 (GAATGSGGEIRD) and Ala-676. 4 residues coordinate Mg(2+): Asp-677, Glu-716, Asn-720, and Asp-884. Ser-886 lines the ATP pocket. Residues 1040-1293 (MAILREQGVN…MFRNARVKLG (254 aa)) enclose the Glutamine amidotransferase type-1 domain. The active-site Nucleophile is the Cys-1133. Active-site residues include His-1258 and Glu-1260.

In the N-terminal section; belongs to the FGAMS family. As to quaternary structure, monomer.

Its subcellular location is the cytoplasm. It carries out the reaction N(2)-formyl-N(1)-(5-phospho-beta-D-ribosyl)glycinamide + L-glutamine + ATP + H2O = 2-formamido-N(1)-(5-O-phospho-beta-D-ribosyl)acetamidine + L-glutamate + ADP + phosphate + H(+). Its pathway is purine metabolism; IMP biosynthesis via de novo pathway; 5-amino-1-(5-phospho-D-ribosyl)imidazole from N(2)-formyl-N(1)-(5-phospho-D-ribosyl)glycinamide: step 1/2. Phosphoribosylformylglycinamidine synthase involved in the purines biosynthetic pathway. Catalyzes the ATP-dependent conversion of formylglycinamide ribonucleotide (FGAR) and glutamine to yield formylglycinamidine ribonucleotide (FGAM) and glutamate. The sequence is that of Phosphoribosylformylglycinamidine synthase from Shewanella denitrificans (strain OS217 / ATCC BAA-1090 / DSM 15013).